The primary structure comprises 358 residues: NADH-quinone oxidoreductase subunit H (358 aa).

The next 8 helical transmembrane spans lie at 30–50 (VVIG…LIYM), 96–116 (FLYN…FSCL), 129–149 (VGVF…LLAG), 168–188 (IISY…LMGT), 201–221 (GWFI…YLIA), 265–285 (FIVA…LHIV), 297–317 (IPGF…LMWI), and 336–356 (YLVP…VFGL).

It belongs to the complex I subunit 1 family. In terms of assembly, NDH-1 is composed of 14 different subunits. Subunits NuoA, H, J, K, L, M, N constitute the membrane sector of the complex.

It localises to the cell inner membrane. It carries out the reaction a quinone + NADH + 5 H(+)(in) = a quinol + NAD(+) + 4 H(+)(out). Its function is as follows. NDH-1 shuttles electrons from NADH, via FMN and iron-sulfur (Fe-S) centers, to quinones in the respiratory chain. The immediate electron acceptor for the enzyme in this species is believed to be ubiquinone. Couples the redox reaction to proton translocation (for every two electrons transferred, four hydrogen ions are translocated across the cytoplasmic membrane), and thus conserves the redox energy in a proton gradient. This subunit may bind ubiquinone. This chain is NADH-quinone oxidoreductase subunit H, found in Bacteroides fragilis (strain ATCC 25285 / DSM 2151 / CCUG 4856 / JCM 11019 / LMG 10263 / NCTC 9343 / Onslow / VPI 2553 / EN-2).